Reading from the N-terminus, the 427-residue chain is Serine protease inhibitor 88Ea (427 aa).

The first 18 residues, Met-1–Ala-18, serve as a signal peptide directing secretion. Asn-224 is a glycosylation site (N-linked (GlcNAc...) asparagine).

Belongs to the serpin family. As to expression, expressed in nurse cells and oocytes. Expressed in wings.

Its subcellular location is the secreted. In terms of biological role, serine protease inhibitor with activity toward trypsin. Negatively regulates the Toll signaling pathway and suppresses the expression of the antifungal peptide drosomycin. Its negative regulation of the Toll signaling pathway also results in the inhibition of the melanization immune response via the phenoloxidase (PPO1) cascade. Essential for unfolding and expansion of the wings after emergence from the pupal case. May regulate the Toll pathway by blocking the proteolysis of the Toll ligand spz. This chain is Serine protease inhibitor 88Ea, found in Drosophila melanogaster (Fruit fly).